The chain runs to 436 residues: Histidinol dehydrogenase (436 aa).

Substrate contacts are provided by T240, Q262, and H265. Residues Q262 and H265 each coordinate Zn(2+). Active-site proton acceptor residues include E331 and H332. Substrate is bound by residues H332, D365, E419, and H424. Residue D365 coordinates Zn(2+). Residue H424 coordinates Zn(2+).

The protein belongs to the histidinol dehydrogenase family. The cofactor is Zn(2+).

The enzyme catalyses L-histidinol + 2 NAD(+) + H2O = L-histidine + 2 NADH + 3 H(+). Its pathway is amino-acid biosynthesis; L-histidine biosynthesis; L-histidine from 5-phospho-alpha-D-ribose 1-diphosphate: step 9/9. Functionally, catalyzes the sequential NAD-dependent oxidations of L-histidinol to L-histidinaldehyde and then to L-histidine. The sequence is that of Histidinol dehydrogenase from Leifsonia xyli subsp. xyli (strain CTCB07).